Reading from the N-terminus, the 137-residue chain is Endoribonuclease YbeY (137 aa).

H103, H107, and H113 together coordinate Zn(2+).

Belongs to the endoribonuclease YbeY family. The cofactor is Zn(2+).

The protein localises to the cytoplasm. In terms of biological role, single strand-specific metallo-endoribonuclease involved in late-stage 70S ribosome quality control and in maturation of the 3' terminus of the 16S rRNA. This chain is Endoribonuclease YbeY, found in Acholeplasma laidlawii (strain PG-8A).